Reading from the N-terminus, the 394-residue chain is Elongation factor Tu 1 (394 aa).

The tr-type G domain occupies 10–204 (KPHVNVGTIG…ALDSYIPEPE (195 aa)). The segment at 19-26 (GHVDHGKT) is G1. 19–26 (GHVDHGKT) provides a ligand contact to GTP. Thr-26 contacts Mg(2+). The tract at residues 60–64 (GITIS) is G2. The G3 stretch occupies residues 81-84 (DCPG). GTP contacts are provided by residues 81–85 (DCPGH) and 136–139 (NKCD). Residues 136-139 (NKCD) are G4. Residues 174-176 (SAL) are G5.

The protein belongs to the TRAFAC class translation factor GTPase superfamily. Classic translation factor GTPase family. EF-Tu/EF-1A subfamily. As to quaternary structure, monomer.

Its subcellular location is the cytoplasm. It catalyses the reaction GTP + H2O = GDP + phosphate + H(+). In terms of biological role, GTP hydrolase that promotes the GTP-dependent binding of aminoacyl-tRNA to the A-site of ribosomes during protein biosynthesis. This Vibrio vulnificus (strain YJ016) protein is Elongation factor Tu 1.